A 143-amino-acid chain; its full sequence is Small ribosomal subunit protein uS12 (143 aa).

The span at 1-20 shows a compositional bias: basic residues; it reads MGKCRGLRTARKLRSHRRDQ. Residues 1–26 are disordered; the sequence is MGKCRGLRTARKLRSHRRDQKWHDKQ. K37 participates in a covalent cross-link: Glycyl lysine isopeptide (Lys-Gly) (interchain with G-Cter in SUMO2). K54 is subject to N6-succinyllysine. A 3-hydroxyproline modification is found at P62. K135 carries the post-translational modification N6-acetyllysine.

It belongs to the universal ribosomal protein uS12 family. As to quaternary structure, component of the 40S small ribosomal subunit. Part of the small subunit (SSU) processome, composed of more than 70 proteins and the RNA chaperone small nucleolar RNA (snoRNA) U3. Hydroxylation at Pro-62 affects translation termination efficiency.

The protein localises to the cytoplasm. Its subcellular location is the cytosol. It is found in the rough endoplasmic reticulum. The protein resides in the nucleus. It localises to the nucleolus. In terms of biological role, component of the ribosome, a large ribonucleoprotein complex responsible for the synthesis of proteins in the cell. The small ribosomal subunit (SSU) binds messenger RNAs (mRNAs) and translates the encoded message by selecting cognate aminoacyl-transfer RNA (tRNA) molecules. The large subunit (LSU) contains the ribosomal catalytic site termed the peptidyl transferase center (PTC), which catalyzes the formation of peptide bonds, thereby polymerizing the amino acids delivered by tRNAs into a polypeptide chain. The nascent polypeptides leave the ribosome through a tunnel in the LSU and interact with protein factors that function in enzymatic processing, targeting, and the membrane insertion of nascent chains at the exit of the ribosomal tunnel. Plays an important role in translational accuracy. Part of the small subunit (SSU) processome, first precursor of the small eukaryotic ribosomal subunit. During the assembly of the SSU processome in the nucleolus, many ribosome biogenesis factors, an RNA chaperone and ribosomal proteins associate with the nascent pre-rRNA and work in concert to generate RNA folding, modifications, rearrangements and cleavage as well as targeted degradation of pre-ribosomal RNA by the RNA exosome. The chain is Small ribosomal subunit protein uS12 (RPS23) from Bos taurus (Bovine).